Reading from the N-terminus, the 285-residue chain is Phasyl DNA replicon protein arp (285 aa).

Functionally, essential for autonomous replication of the phasyl DNA replicon. In Escherichia coli, this protein is Phasyl DNA replicon protein arp (arp).